The following is a 378-amino-acid chain: Histidinol-phosphate aminotransferase 2 (378 aa).

Lys240 is modified (N6-(pyridoxal phosphate)lysine).

It belongs to the class-II pyridoxal-phosphate-dependent aminotransferase family. Histidinol-phosphate aminotransferase subfamily. In terms of assembly, homodimer. It depends on pyridoxal 5'-phosphate as a cofactor.

The catalysed reaction is L-histidinol phosphate + 2-oxoglutarate = 3-(imidazol-4-yl)-2-oxopropyl phosphate + L-glutamate. It participates in amino-acid biosynthesis; L-histidine biosynthesis; L-histidine from 5-phospho-alpha-D-ribose 1-diphosphate: step 7/9. This Caulobacter vibrioides (strain ATCC 19089 / CIP 103742 / CB 15) (Caulobacter crescentus) protein is Histidinol-phosphate aminotransferase 2 (hisC2).